A 643-amino-acid polypeptide reads, in one-letter code: DNA polymerase III subunit tau (643 aa).

An ATP-binding site is contributed by 45–52 (GTRGVGKT). Zn(2+) contacts are provided by Cys64, Cys73, Cys76, and Cys79. The disordered stretch occupies residues 385-404 (TPTQVPPQPQSAPQQAPTVP).

The protein belongs to the DnaX/STICHEL family. As to quaternary structure, the DNA polymerase III holoenzyme complex contains at least 10 different subunits organized into 3 functionally essential subassemblies: the Pol III core, the beta sliding clamp processivity factor and the clamp-loading complex. The Pol III core (subunits alpha, epsilon and theta) contains the polymerase and the 3'-5' exonuclease proofreading activities. The polymerase is tethered to the template via the dimeric beta sliding clamp processivity factor. The clamp-loading complex (also called gamma complex) assembles the beta sliding clamp onto the primed template and plays a central role in the organization and communication at the replication fork. The clamp-loading complex contains delta, delta', psi and chi, and 3 copies of either or both of two different DnaX proteins, gamma and tau. The DNA replisome complex has a single clamp loader (3 tau and 1 each of delta, delta', psi and chi subunits) which binds 3 Pol III cores (1 core on the leading strand and 2 on the lagging strand) each with a beta sliding clamp dimer. Additional proteins in the replisome are other copies of gamma, psi and chi, Ssb, DNA helicase and RNA primase. The clamp loader hydrolyzes ATP to assemble the beta processivity factor onto the primed template and plays a central role in the organization and communication at the replication fork; the minimal complex to load the beta sliding clamp on DNA is delta, delta', gamma.

The catalysed reaction is DNA(n) + a 2'-deoxyribonucleoside 5'-triphosphate = DNA(n+1) + diphosphate. Functionally, part of the beta sliding clamp loading complex, which hydrolyzes ATP to load the beta clamp onto primed DNA to form the DNA replication pre-initiation complex. DNA polymerase III is a complex, multichain enzyme responsible for most of the replicative synthesis in bacteria. This DNA polymerase also exhibits 3'-5' exonuclease activity. The gamma complex (gamma(3),delta,delta') is thought to load beta dimers onto DNA by binding ATP which alters the complex's conformation so it can bind beta sliding clamp dimers and open them at one interface. Primed DNA is recognized, ATP is hydrolyzed releasing the gamma complex and closing the beta sliding clamp ring around the primed DNA. Serves as a scaffold to trimerize the core complex. Its function is as follows. Interacts with the delta and delta' subunits to transfer the beta subunit on the DNA. Interacts with ATP, drives ATP-induced conformational changes in the gamma complex that opens the beta sliding clamp ring. After loading of primed DNA ATP is hydrolyzed and the beta sliding clamp ring closes. In Escherichia coli (strain K12), this protein is DNA polymerase III subunit tau (dnaX).